Consider the following 509-residue polypeptide: Sensor histidine kinase TrcS (509 aa).

A run of 2 helical transmembrane segments spans residues 24-44 (LLLG…VVSV) and 188-208 (VALV…VVGY). The 63-residue stretch at 207–269 (GYALRPLRRV…LLDNVDGALA (63 aa)) folds into the HAMP domain. One can recognise a Histidine kinase domain in the interval 284 to 502 (DASHELRTPL…VFRVRLPMIE (219 aa)). Residue histidine 287 is modified to Phosphohistidine; by autocatalysis.

It depends on a divalent metal cation as a cofactor. In terms of processing, autophosphorylated.

It localises to the cell membrane. It carries out the reaction ATP + protein L-histidine = ADP + protein N-phospho-L-histidine.. Member of the two-component regulatory system TrcS/TrcR. Phosphorylates TrcR. The TrcR-TrcS regulatory system may act as a transition regulatory system involved in adapting to an intracellular environment and transitioning from latency to reactivation. This chain is Sensor histidine kinase TrcS, found in Mycobacterium tuberculosis (strain ATCC 25618 / H37Rv).